The following is a 339-amino-acid chain: Inositol 2-dehydrogenase (339 aa).

Belongs to the Gfo/Idh/MocA family. In terms of assembly, homotetramer.

It carries out the reaction myo-inositol + NAD(+) = scyllo-inosose + NADH + H(+). Its function is as follows. Involved in the oxidation of myo-inositol (MI) to 2-keto-myo-inositol (2KMI or 2-inosose). The chain is Inositol 2-dehydrogenase from Leifsonia xyli subsp. xyli (strain CTCB07).